We begin with the raw amino-acid sequence, 801 residues long: MDPFNASWWTNMAWHGYSLSEDGTKFCEMLPTKINSFGLSEKILHKSVGLYFWEYPLPNLELIILSVFFFWQFFEILFKMSNIPIPKMPSMMLGCVVINLFSYTRPGSLLHRMFFPDDGRPKVAETGGAFGFVMYWFLKGVSIDVGMLRKTEPRAALIGFNTLVIPYISGYILMRTRKHFGKLAMTELQYQEIILLQSLSSFAGVNGLLTDLKINHSEFGRMVQSCAAVTDLVIFIMVSGTVLLKGQKGLPHGIVIVLVIGFLVYIVWPVMLWIIKQTPEGRLVKDVYIYLVMATAYFVYMFWLNFFQFSTYGWFIIGLATPAGPPLGSALIQRFECFNVGVLLPLFGSLSMEQLDISWLMREILNLKHMEGFAYEAISVILIVTVVKFVVTAITAFAVRIPYRDSIVLAMVLSNRSIFELGYLGYIVELKMFDNKSFTIAALSVLVSSLLTPIAIEFMYEPQHIFSSYRDRNMLTLKHDSKLKTLVCIHKPDHITSMVNFVELFNPTQESKLECNVLHLVELIGQAIPTFISHKMQKPKVGTRSCSRNVITAFLSLRRHLTKEAISIDIFTSASLVEHMHEDLCWLALDKNVALVVLPFHRSWSVDRSTIVSDDKAMQNLNHKVLKRASCSVGIFVYRKPLWESQMHGSCYKVCAIVVGGKDDKEALAFTNRMRRNKQTSVTILHLIPQLTTEESEDSVQKLDYDDIKEIMKTEDSNENDSWICIEKSVKEGAETSVILRSIAYDYDLFIVGRSSGMNSAVTKGLNEWTEFEELGALGDVIASKEFPSRASVLVLQQQQY.

Helical transmembrane passes span 58 to 78 (PNLE…EILF), 83 to 103 (IPIP…LFSY), 128 to 148 (GAFG…VGML), 154 to 174 (RAAL…YILM), 192 to 212 (EIIL…LTDL), 223 to 243 (VQSC…GTVL), 254 to 274 (IVIV…MLWI), 287 to 307 (VYIY…LNFF), 312 to 332 (YGWF…SALI), 340 to 360 (VGVL…ISWL), 377 to 397 (AISV…ITAF), 407 to 427 (IVLA…LGYI), and 438 to 458 (FTIA…AIEF).

Belongs to the monovalent cation:proton antiporter 2 (CPA2) transporter (TC 2.A.37) family. CHX (TC 2.A.37.4) subfamily. As to expression, expressed in pollen.

It localises to the membrane. May operate as a cation/H(+) antiporter. The polypeptide is Cation/H(+) antiporter 7 (CHX7) (Arabidopsis thaliana (Mouse-ear cress)).